We begin with the raw amino-acid sequence, 360 residues long: Photosystem II protein D1 3 (360 aa).

3 consecutive transmembrane segments (helical) span residues 29–46 (YVGW…AATV), 118–133 (HFLI…QWEL), and 142–156 (WICV…SATA). Position 118 (His-118) interacts with chlorophyll a. Tyr-126 provides a ligand contact to pheophytin a. Asp-170 and Glu-189 together coordinate [CaMn4O5] cluster. A helical transmembrane segment spans residues 197–218 (FHMLGVAGVFGGSLFSAMHGSL). His-198 contributes to the chlorophyll a binding site. Residues His-215 and 264–265 (SF) contribute to the a quinone site. His-215 lines the Fe cation pocket. His-272 contributes to the Fe cation binding site. Residues 274 to 288 (FLAAWPVIGIWFTAL) form a helical membrane-spanning segment. [CaMn4O5] cluster contacts are provided by His-332, Glu-333, Asp-342, and Ala-344. The propeptide occupies 345 to 360 (AGEVAPVALTAPAING).

This sequence belongs to the reaction center PufL/M/PsbA/D family. PSII is composed of 1 copy each of membrane proteins PsbA, PsbB, PsbC, PsbD, PsbE, PsbF, PsbH, PsbI, PsbJ, PsbK, PsbL, PsbM, PsbT, PsbX, PsbY, PsbZ, Psb30/Ycf12, peripheral proteins PsbO, CyanoQ (PsbQ), PsbU, PsbV and a large number of cofactors. It forms dimeric complexes. The cofactor is The D1/D2 heterodimer binds P680, chlorophylls that are the primary electron donor of PSII, and subsequent electron acceptors. It shares a non-heme iron and each subunit binds pheophytin, quinone, additional chlorophylls, carotenoids and lipids. D1 provides most of the ligands for the Mn4-Ca-O5 cluster of the oxygen-evolving complex (OEC). There is also a Cl(-1) ion associated with D1 and D2, which is required for oxygen evolution. The PSII complex binds additional chlorophylls, carotenoids and specific lipids.. Tyr-161 forms a radical intermediate that is referred to as redox-active TyrZ, YZ or Y-Z. Post-translationally, C-terminally processed by CtpA; processing is essential to allow assembly of the oxygen-evolving complex and thus photosynthetic growth.

It is found in the cellular thylakoid membrane. The enzyme catalyses 2 a plastoquinone + 4 hnu + 2 H2O = 2 a plastoquinol + O2. Photosystem II (PSII) is a light-driven water:plastoquinone oxidoreductase that uses light energy to abstract electrons from H(2)O, generating O(2) and a proton gradient subsequently used for ATP formation. It consists of a core antenna complex that captures photons, and an electron transfer chain that converts photonic excitation into a charge separation. The D1/D2 (PsbA/PsbD) reaction center heterodimer binds P680, the primary electron donor of PSII as well as several subsequent electron acceptors. The chain is Photosystem II protein D1 3 from Trichormus variabilis (strain ATCC 29413 / PCC 7937) (Anabaena variabilis).